The following is a 346-amino-acid chain: Methionine import ATP-binding protein MetN (346 aa).

In terms of domain architecture, ABC transporter spans 2–243; sequence VRFEGISKTY…PKHPITQSFL (242 aa). ATP is bound at residue 40 to 47; it reads GRSGAGKS.

The protein belongs to the ABC transporter superfamily. Methionine importer (TC 3.A.1.24) family. In terms of assembly, the complex is composed of two ATP-binding proteins (MetN), two transmembrane proteins (MetI) and a solute-binding protein (MetQ).

The protein localises to the cell inner membrane. The catalysed reaction is L-methionine(out) + ATP + H2O = L-methionine(in) + ADP + phosphate + H(+). The enzyme catalyses D-methionine(out) + ATP + H2O = D-methionine(in) + ADP + phosphate + H(+). In terms of biological role, part of the ABC transporter complex MetNIQ involved in methionine import. Responsible for energy coupling to the transport system. The polypeptide is Methionine import ATP-binding protein MetN (Bradyrhizobium diazoefficiens (strain JCM 10833 / BCRC 13528 / IAM 13628 / NBRC 14792 / USDA 110)).